A 59-amino-acid chain; its full sequence is Gallinacin-14 (59 aa).

Residues 1-18 form the signal peptide; that stretch reads MGIFLLFLVLLAVPQAAP. 3 cysteine pairs are disulfide-bonded: Cys-25-Cys-54, Cys-32-Cys-47, and Cys-37-Cys-55.

The protein belongs to the beta-defensin family.

Its subcellular location is the secreted. It is found in the cytoplasmic granule. Has bactericidal activity. This Gallus gallus (Chicken) protein is Gallinacin-14 (GAL14).